The sequence spans 482 residues: UDP-N-acetylmuramate--L-alanine ligase (482 aa).

119–125 is an ATP binding site; sequence GTHGKTT.

Belongs to the MurCDEF family.

The protein resides in the cytoplasm. It carries out the reaction UDP-N-acetyl-alpha-D-muramate + L-alanine + ATP = UDP-N-acetyl-alpha-D-muramoyl-L-alanine + ADP + phosphate + H(+). Its pathway is cell wall biogenesis; peptidoglycan biosynthesis. In terms of biological role, cell wall formation. This Cyanothece sp. (strain PCC 7425 / ATCC 29141) protein is UDP-N-acetylmuramate--L-alanine ligase.